A 338-amino-acid chain; its full sequence is Methionyl-tRNA formyltransferase (338 aa).

110–113 (SLLP) contacts (6S)-5,6,7,8-tetrahydrofolate.

This sequence belongs to the Fmt family.

It carries out the reaction L-methionyl-tRNA(fMet) + (6R)-10-formyltetrahydrofolate = N-formyl-L-methionyl-tRNA(fMet) + (6S)-5,6,7,8-tetrahydrofolate + H(+). In terms of biological role, attaches a formyl group to the free amino group of methionyl-tRNA(fMet). The formyl group appears to play a dual role in the initiator identity of N-formylmethionyl-tRNA by promoting its recognition by IF2 and preventing the misappropriation of this tRNA by the elongation apparatus. The sequence is that of Methionyl-tRNA formyltransferase from Synechococcus sp. (strain CC9902).